Here is a 248-residue protein sequence, read N- to C-terminus: MLLIPAIDLKDGQCVRLKQGDMDQATVFSEDPAAMARHWVEQGARRLHLVDLNGAFVGKPRNEAAIKSIIAEVGDEIPVQLGGGIRDLNTIERWLDDGLSYVIIGTAAVKNPGFLKDACSAFGGHIIVGLDAKDGKVATDGWSKLTGHEVADLARKYEDYGVEAIIYTDIGRDGMLQGINIDATVKLAQSMSIPVIASGGLSNLADIDNLCAVEGEGVEGVICGRAIYSGDLNFADAQARADKLRDGQ.

Asp-8 functions as the Proton acceptor in the catalytic mechanism. Residue Asp-131 is the Proton donor of the active site.

The protein belongs to the HisA/HisF family.

It localises to the cytoplasm. It carries out the reaction 1-(5-phospho-beta-D-ribosyl)-5-[(5-phospho-beta-D-ribosylamino)methylideneamino]imidazole-4-carboxamide = 5-[(5-phospho-1-deoxy-D-ribulos-1-ylimino)methylamino]-1-(5-phospho-beta-D-ribosyl)imidazole-4-carboxamide. Its pathway is amino-acid biosynthesis; L-histidine biosynthesis; L-histidine from 5-phospho-alpha-D-ribose 1-diphosphate: step 4/9. This chain is 1-(5-phosphoribosyl)-5-[(5-phosphoribosylamino)methylideneamino] imidazole-4-carboxamide isomerase, found in Cupriavidus taiwanensis (strain DSM 17343 / BCRC 17206 / CCUG 44338 / CIP 107171 / LMG 19424 / R1) (Ralstonia taiwanensis (strain LMG 19424)).